Reading from the N-terminus, the 1210-residue chain is Disease resistance-like protein DSC2 (1210 aa).

The region spanning 59–223 (WTHQVFPSFR…KVAKDVSDVL (165 aa)) is the TIR domain. Residue Glu-134 is part of the active site. Residues 241-511 (ITRINSLLCL…CLFNGCQVNH (271 aa)) form the NB-ARC domain. 9 LRR repeats span residues 662–685 (AKFLVELIMRANKFEKLWEGIQPL), 686–709 (KNLKRMELGDARNLKEIPDLSNAT), 711–732 (LESLLLSFCTSLLEIPSSIRGT), 756–780 (ATSLEELNLSACSNLVELPCALPGD), 783–804 (MRSLSKLLLNGSSRLKTFPEIS), 805–828 (TNIQELNLSGTAIEEVPSSIRLWS), 830–848 (LDKLDMSRCKNLKMFPPVP), 849–873 (DGISVLNLSETEIEDIPPWVENLSQ), and 940–970 (LPELVYTSPVSLHFISNEFKTIPDCIKNLSQ).

This sequence belongs to the disease resistance NB-LRR family. Interacts with DSC1.

The enzyme catalyses NAD(+) + H2O = ADP-D-ribose + nicotinamide + H(+). TIR-NB-LRR receptor-like protein involved in plant defense. Acts as a trigger of hypersensitive response (HR). Functions as a guard of CAMTA3, a negative regulator of immunity, during pathogen infection. The polypeptide is Disease resistance-like protein DSC2 (Arabidopsis thaliana (Mouse-ear cress)).